Reading from the N-terminus, the 587-residue chain is Phosphatidate phosphatase APP1 (587 aa).

Disordered regions lie at residues 1–28 (MNSQ…RMGK) and 150–178 (PPHL…SENR). Composition is skewed to low complexity over residues 9–22 (SSSS…PTSG) and 163–174 (SQSSIESSLSSK). The short motif at 281–285 (DIDDT) is the DXDXT motif element. The segment at 452 to 521 (QQRPMQMTKS…NRQLPNLDAN (70 aa)) is disordered. An interaction with SH3 domain of ABP1 region spans residues 467 to 483 (RRPPPPPIPSTQKPSLT).

In terms of assembly, monomer. Interacts with ABP1. Requires Mg(2+) as cofactor. N-glycosylated.

Its subcellular location is the cytoplasm. The protein localises to the cytoskeleton. It localises to the actin patch. It carries out the reaction a 1,2-diacyl-sn-glycero-3-phosphate + H2O = a 1,2-diacyl-sn-glycerol + phosphate. The enzyme catalyses 1,2-di-(9Z-octadecenoyl)-sn-glycero-3-phosphate + H2O = 1,2-di-(9Z-octadecenoyl)-sn-glycerol + phosphate. Its activity is regulated as follows. Inhibited by N-ethylmaleimide. Its function is as follows. Mg(2+)-dependent phosphatidate (PA) phosphatase which catalyzes the dephosphorylation of PA to yield diacylglycerol. May play a role in vesicular trafficking through its PAP activity at cortical actin patches. Can also utilize diacylglycerol pyrophosphate and lyso-PA as substrates with specificity constants 4- and 7-fold lower, respectively, when compared with PA. In Saccharomyces cerevisiae (strain ATCC 204508 / S288c) (Baker's yeast), this protein is Phosphatidate phosphatase APP1 (APP1).